We begin with the raw amino-acid sequence, 253 residues long: Bridging integrator 3 (253 aa).

The 224-residue stretch at 9–232 (GQPKKQIVSK…LDQPGHSDEH (224 aa)) folds into the BAR domain. Coiled coils occupy residues 16–57 (VSKT…AMSK) and 120–151 (SLNMAVKRREQALQDYGRLQAKVEKYEEKEKT).

The protein resides in the cytoplasm. Its subcellular location is the cytoskeleton. In terms of biological role, involved in cytokinesis and septation where it has a role in the localization of F-actin. This is Bridging integrator 3 (Bin3) from Rattus norvegicus (Rat).